The sequence spans 440 residues: COP9 signalosome complex subunit 4 (440 aa).

The PCI domain occupies 216-386; sequence SNRQFLAASQ…RIIYFESGLE (171 aa).

The protein belongs to the CSN4 family. Component of the COP9 signalosome (CSN) complex.

It localises to the cytoplasm. The protein localises to the nucleus. Its function is as follows. Component of the COP9 signalosome (CSN) complex that acts as an regulator of the ubiquitin (Ubl) conjugation pathway by mediating the deneddylation of the cullin subunit of SCF-type E3 ubiquitin-protein ligase complexes. The CSN complex is involved in the regulation of the circadian clock through its control of the stability of the SCF(FWD1) complex. The polypeptide is COP9 signalosome complex subunit 4 (csn-4) (Neurospora crassa (strain ATCC 24698 / 74-OR23-1A / CBS 708.71 / DSM 1257 / FGSC 987)).